The following is a 1622-amino-acid chain: FK506-binding protein 5 (1622 aa).

Residues 178–269 (GDRVSIKYAG…IFDLEVTGSK (92 aa)) enclose the PPIase FKBP-type domain. The segment at 268–306 (SKKKEGSEPSLPSLNGQPSNAPQQSLPTQLFDNSPVPQD) is disordered. Residues 277 to 303 (SLPSLNGQPSNAPQQSLPTQLFDNSPV) show a composition bias toward polar residues. Arg314 bears the Omega-N-methylarginine mark. Disordered stretches follow at residues 320–432 (RATG…GFNN) and 518–538 (SPPPPVQQAPPPTPAPAPPPP). A compositionally biased stretch (low complexity) spans 335–432 (ESNSRNSHSN…NMNNNNGFNN (98 aa)). Coiled-coil stretches lie at residues 607–827 (LVQT…ETER) and 854–961 (KKEE…LESQ). Disordered stretches follow at residues 1043–1097 (KQQQ…EVVV) and 1122–1622 (EEVK…VLPL). Acidic residues-rich tracts occupy residues 1050–1093 (KEEE…EEEK) and 1152–1168 (DDEDDDDDEDDYDDINE). Over residues 1169–1182 (EDLKNIDAEIEKMQ) the composition is skewed to basic and acidic residues. Composition is skewed to acidic residues over residues 1185 to 1199 (MGDELEDDDDEEEEK) and 1222 to 1260 (ESEEEEEEETKVEVPVLEEEKEEEETKVEVPVLEDEQED). A compositionally biased stretch (basic and acidic residues) spans 1261-1271 (KVESDVEEKIV). The segment covering 1320-1335 (DDDEDNEKDVASDSEE) has biased composition (acidic residues). The span at 1353-1369 (EEKVVEQVKEEINETKF) shows a compositional bias: basic and acidic residues. A compositionally biased stretch (acidic residues) spans 1380 to 1412 (TTTEEKEEEKEEEKVEEEEEKVVEPPTIDDDET). 2 stretches are compositionally biased toward low complexity: residues 1435–1449 (STTAATTSTTTTSST) and 1465–1504 (KTSFFDFDDSPFSAETETETKSTAASSDPFADTTSSTPTS). Composition is skewed to polar residues over residues 1519 to 1532 (FGNSSDIFDKPSTT) and 1581 to 1609 (AKSNNNTPSRQKQDFSSLFGSDPTISPLT).

This sequence belongs to the FKBP-type PPIase family.

It catalyses the reaction [protein]-peptidylproline (omega=180) = [protein]-peptidylproline (omega=0). With respect to regulation, inhibited by both FK506 and rapamycin. Its function is as follows. PPIases accelerate the folding of proteins by catalyzing the cis-trans isomerization of proline imidic peptide bonds in oligopeptides. This Dictyostelium discoideum (Social amoeba) protein is FK506-binding protein 5 (fkbp5).